Reading from the N-terminus, the 122-residue chain is Large ribosomal subunit protein uL14 (122 aa).

The protein belongs to the universal ribosomal protein uL14 family. In terms of assembly, part of the 50S ribosomal subunit. Forms a cluster with proteins L3 and L19. In the 70S ribosome, L14 and L19 interact and together make contacts with the 16S rRNA in bridges B5 and B8.

Its function is as follows. Binds to 23S rRNA. Forms part of two intersubunit bridges in the 70S ribosome. The chain is Large ribosomal subunit protein uL14 from Caldanaerobacter subterraneus subsp. tengcongensis (strain DSM 15242 / JCM 11007 / NBRC 100824 / MB4) (Thermoanaerobacter tengcongensis).